The chain runs to 701 residues: Eukaryotic peptide chain release factor GTP-binding subunit (701 aa).

A compositionally biased stretch (polar residues) spans 1–25; the sequence is MSDDQQYNQDKLSQDFQNTSIGSGE. Disordered regions lie at residues 1–63, 91–124, and 164–259; these read MSDD…YQGG, NQGY…NQQD, and KLAN…VIQE. A several sort of repeats region spans residues 20–131; that stretch reads SIGSGEQQQQ…QQDQQPVQNQ (112 aa). Positions 26 to 40 are enriched in low complexity; it reads QQQQSYQQYQQQPQQ. The span at 41-54 shows a compositional bias: polar residues; the sequence is NNFNANSAPTFTPS. The charged stretch occupies residues 132-271; it reads GMSLADFQKQ…DEVDEEVVKD (140 aa). Basic and acidic residues predominate over residues 170 to 224; the sequence is KAPETESKEATPAATEKEATPAATEKEATPAATEKEATPAATEKETTPAPAKKEA. The span at 228–252 shows a compositional bias: polar residues; the sequence is SVKSESKPASKSTSKVATKESTPVT. The 226-residue stretch at 276–501 folds into the tr-type G domain; sequence KDHVSIIFMG…FLDNMKTMQR (226 aa). The interval 285 to 292 is G1; that stretch reads GHVDAGKS. Residue 285-292 coordinates GTP; that stretch reads GHVDAGKS. Residues 341-345 form a G2 region; it reads GKTIE. A Phosphothreonine modification is found at Thr359. The interval 362–365 is G3; it reads DAPG. Residues 362–366 and 424–427 each bind GTP; these read DAPGH and NKMD. A G4 region spans residues 424–427; sequence NKMD. A G5 region spans residues 465-467; the sequence is SGY.

This sequence belongs to the TRAFAC class translation factor GTPase superfamily. Classic translation factor GTPase family. ERF3 subfamily.

Its subcellular location is the cytoplasm. In terms of biological role, involved in translation termination. Stimulates the activity of ERF1. Binds guanine nucleotides. The polypeptide is Eukaryotic peptide chain release factor GTP-binding subunit (SUP35) (Debaryomyces hansenii (strain ATCC 36239 / CBS 767 / BCRC 21394 / JCM 1990 / NBRC 0083 / IGC 2968) (Yeast)).